The primary structure comprises 206 residues: Small ribosomal subunit protein uS4 (206 aa).

In terms of domain architecture, S4 RNA-binding spans 96 to 156; it reads RRLDNVVYRM…DKSKNQSRIK (61 aa).

It belongs to the universal ribosomal protein uS4 family. In terms of assembly, part of the 30S ribosomal subunit. Contacts protein S5. The interaction surface between S4 and S5 is involved in control of translational fidelity.

One of the primary rRNA binding proteins, it binds directly to 16S rRNA where it nucleates assembly of the body of the 30S subunit. Its function is as follows. With S5 and S12 plays an important role in translational accuracy. This is Small ribosomal subunit protein uS4 from Buchnera aphidicola subsp. Schizaphis graminum (strain Sg).